Here is a 654-residue protein sequence, read N- to C-terminus: MYLAILTLPLLSATVAGFLGRKIGKTGSHLITCSSLVLTALLALVAFYEVGLCGSPVSIKLMSWIDSEFLLVSWGFIYDSLTVSMLLPVLIVSALVHIYSTNYMSEDPHNQRFFAYLSMFTFFMLMLVTGDNYLVMFIGWEGVGISSYLLINFWFTRLQANKAAIKALVMNRVGDWGFSIGLWAIFWTFGNLDFTTVFSLAPFINEELITIISICLLVAAMGKSAQIGLHTWLPDAMEGPTPVSALIHAATMVTAGVYLLLRSSPILEFGSTALILITWVGALTAFFAATTGLLQNDLKRVIAYSTCSQLGLLFLVCGLSQYNVALFHLVNHAWFKALLFLSAGSVIHAMNDEQDLRKFGGLSRLLPFTYSMMVIGSLSLMALPFLTGFYSKDLIIELAYGHYSFSGNLVYWLASVAAVFTAMYSIRSLYLTFLGYPNGPKINYNNIHEAPLIMAIPLVVLAVFSIFFGYVTKDLFVGMGTDFYNNALFIHPNHSILVDTEFGLPMSMKFLPLIGSLLGTFGVLAIYWIFDELPNKFISTKLGRGIYRFFNQKYYFDNIYNNLLNKFLNFGYTTNKILDRGAIELVGPYGLVNVFKSASNKVSGLDSGFIPTYAMYIFNGLILFITLIFFIGDPRLFVLLLWAVFLLPNNTTQK.

16 helical membrane-spanning segments follow: residues 1-21 (MYLAILTLPLLSATVAGFLGR), 30-50 (LITCSSLVLTALLALVAFYEV), 76-96 (FIYDSLTVSMLLPVLIVSALV), 113-133 (FFAYLSMFTFFMLMLVTGDNY), 135-155 (VMFIGWEGVGISSYLLINFWF), 178-198 (FSIGLWAIFWTFGNLDFTTVF), 200-220 (LAPFINEELITIISICLLVAA), 241-261 (TPVSALIHAATMVTAGVYLLL), 274-294 (LILITWVGALTAFFAATTGLL), 301-320 (VIAYSTCSQLGLLFLVCGLS), 324-346 (VALFHLVNHAWFKALLFLSAGSV), 365-385 (LLPFTYSMMVIGSLSLMALPF), 406-426 (SGNLVYWLASVAAVFTAMYSI), 451-471 (PLIMAIPLVVLAVFSIFFGYV), 510-530 (FLPLIGSLLGTFGVLAIYWIF), and 612-632 (TYAMYIFNGLILFITLIFFIG).

The protein belongs to the complex I subunit 5 family.

The protein localises to the mitochondrion inner membrane. The catalysed reaction is a ubiquinone + NADH + 5 H(+)(in) = a ubiquinol + NAD(+) + 4 H(+)(out). Functionally, core subunit of the mitochondrial membrane respiratory chain NADH dehydrogenase (Complex I) that is believed to belong to the minimal assembly required for catalysis. Complex I functions in the transfer of electrons from NADH to the respiratory chain. The immediate electron acceptor for the enzyme is believed to be ubiquinone. In Rhizopus stolonifer (Rhizopus nigricans), this protein is NADH-ubiquinone oxidoreductase chain 5 (ND5).